The sequence spans 258 residues: Coiled-coil domain-containing protein 107 (258 aa).

The N-terminal stretch at 1–24 is a signal peptide; that stretch reads MASVVSLAGTLGLLLVSALPEVLG. Residues 25–35 show a composition bias toward basic and acidic residues; it reads DRRSPDRRAHP. Residues 25-63 are disordered; it reads DRRSPDRRAHPGDAGQVGPAAAEPRRQSPPSKNQRERAR. The chain crosses the membrane as a helical span at residues 66–86; that stretch reads ALPLGALYTAAAVAFVLYKCL. Residues 106 to 134 adopt a coiled-coil conformation; the sequence is LQSEQHLAQLTQQLVQTEQHLNSLMAQLD. Residues 203-222 are disordered; that stretch reads EPLNWNTGTRNLTPPREMQP.

It localises to the membrane. This Bos taurus (Bovine) protein is Coiled-coil domain-containing protein 107 (CCDC107).